Consider the following 109-residue polypeptide: Mitochondrial import inner membrane translocase subunit TIM12 (109 aa).

N-acetylserine is present on serine 2. The Twin CX3C motif motif lies at 40–66 (CLEKCIPHEGFGEPDLTKGEQCCIDRC). 2 disulfide bridges follow: cysteine 40-cysteine 66 and cysteine 44-cysteine 62.

Belongs to the small Tim family. As to quaternary structure, component of the TIM22 complex, whose core is composed of TIM18, TIM22 and TIM54, associated with the peripheral proteins MRS5/TIM12 and the 70 kDa heterohexamer composed of TIM9 and TIM10 (or TIM8 and TIM13). Interacts directly with both the TIM22 protein and the TIM9-TIM10 heterohexamer. Interacts with multi-pass transmembrane proteins in transit.

The protein localises to the mitochondrion inner membrane. Its subcellular location is the mitochondrion intermembrane space. Its function is as follows. Essential component of the TIM22 complex, a complex that mediates the import and insertion of multi-pass transmembrane proteins into the mitochondrial inner membrane. The TIM22 complex forms a twin-pore translocase that uses the membrane potential as external driving force. In the TIM22 complex, it acts as a docking point for the soluble TIM9-TIM10 heterohexamer that guides the target proteins in transit through the aqueous mitochondrial intermembrane space. In Saccharomyces cerevisiae (strain ATCC 204508 / S288c) (Baker's yeast), this protein is Mitochondrial import inner membrane translocase subunit TIM12 (TIM12).